The primary structure comprises 274 residues: Transcription factor MYB32 (274 aa).

HTH myb-type domains are found at residues 9–61 (KDHT…INYL) and 62–116 (RPDL…KRKL). DNA-binding regions (H-T-H motif) lie at residues 37 to 61 (WRSL…INYL) and 89 to 112 (WSLI…NTHV). The tract at residues 123–144 (PATHRPINETKTSQDSSDSSKT) is disordered.

Mostly expressed in roots, and, to a lower extent, in stems, flower buds, and siliques.

It is found in the nucleus. This is Transcription factor MYB32 (MYB32) from Arabidopsis thaliana (Mouse-ear cress).